We begin with the raw amino-acid sequence, 146 residues long: Basic phospholipase A2 beta-bungarotoxin A2 chain (146 aa).

A signal peptide spans 1–19 (MNPAHLLVLSAVCVSLLGA). A propeptide spanning residues 20–27 (SNIPPQSL) is cleaved from the precursor. Cystine bridges form between cysteine 54/cysteine 145, cysteine 56/cysteine 72, cysteine 71/cysteine 126, cysteine 78/cysteine 119, cysteine 87/cysteine 112, and cysteine 105/cysteine 117. Residues tyrosine 55, glycine 57, and glycine 59 each contribute to the Ca(2+) site. Histidine 75 is an active-site residue. Aspartate 76 is a binding site for Ca(2+). Residue aspartate 120 is part of the active site.

This sequence belongs to the phospholipase A2 family. Group I subfamily. D49 sub-subfamily. In terms of assembly, heterodimer; disulfide-linked. The A chain has phospholipase A2 activity and the B chain shows homology with the basic protease inhibitors. Requires Ca(2+) as cofactor. As to expression, expressed by the venom gland.

It is found in the secreted. The enzyme catalyses a 1,2-diacyl-sn-glycero-3-phosphocholine + H2O = a 1-acyl-sn-glycero-3-phosphocholine + a fatty acid + H(+). Its function is as follows. Snake venom phospholipase A2 (PLA2) that inhibits neuromuscular transmission by blocking acetylcholine release from the nerve termini. PLA2 catalyzes the calcium-dependent hydrolysis of the 2-acyl groups in 3-sn-phosphoglycerides. This is Basic phospholipase A2 beta-bungarotoxin A2 chain from Bungarus flaviceps flaviceps (Red-headed krait).